An 86-amino-acid polypeptide reads, in one-letter code: Cell division topological specificity factor (86 aa).

Belongs to the MinE family.

In terms of biological role, prevents the cell division inhibition by proteins MinC and MinD at internal division sites while permitting inhibition at polar sites. This ensures cell division at the proper site by restricting the formation of a division septum at the midpoint of the long axis of the cell. The protein is Cell division topological specificity factor of Aliivibrio salmonicida (strain LFI1238) (Vibrio salmonicida (strain LFI1238)).